The primary structure comprises 453 residues: MQVKETVTDGLKREFQVTLAVSDIGSQVDARLDELKDKVRLNGFRPGKVPLSHLKRTYGRSVTAEVLEKLIRETNDNIFTERGFRLATEPKITMPTEAKEVEDVLAGNADLNYTVAVEVVPEIQLVDFKTISVEKPVVEVGDSDVDDAIKRIVEANRGYDDKGEGATAASGDRVTVSFKGSIDGTPFDGGSAEGIPVVIGSGTFIPGFEDQLIGIAVGETRTIKATFPTNYATAELAGKAAEFETTATLVEAPKDTPADDEFAKTLGLESLDKLKEAARGRLAAEYAGVSRQRVKRALLDRLDEAHQFEAPATLVEQEFEALWRSIVGEMTSTGSTFESENTTEDAAKEEYRKIADRRVRLGLVLSEIGEKNKIQVTDDEVSRAVMERARQMPGREKEVWEFYRKTPEAVAQLRAPIFEDKVVDFILELATVTEKPVSKEELYKDDDADKSAA.

One can recognise a PPIase FKBP-type domain in the interval 171 to 256; the sequence is GDRVTVSFKG…ATLVEAPKDT (86 aa).

It belongs to the FKBP-type PPIase family. Tig subfamily.

Its subcellular location is the cytoplasm. The enzyme catalyses [protein]-peptidylproline (omega=180) = [protein]-peptidylproline (omega=0). Its function is as follows. Involved in protein export. Acts as a chaperone by maintaining the newly synthesized protein in an open conformation. Functions as a peptidyl-prolyl cis-trans isomerase. In Rhodopseudomonas palustris (strain BisA53), this protein is Trigger factor.